The following is a 330-amino-acid chain: L-tryptophan isonitrile synthase AmbI2 (330 aa).

This sequence belongs to the isocyanide synthase family.

The catalysed reaction is D-ribulose 5-phosphate + L-tryptophan = (2S)-3-(1H-indol-3-yl)-2-isocyanopropanoate + hydroxyacetone + formaldehyde + phosphate + H2O + H(+). Its function is as follows. Involved in the biosynthesis of ambiguines, a family of hapalindole-type alkaloids. Responsible for the synthesis of the isonitrile group on tryptophan using ribulose 5-phosphate as the source of the carbon atom. The protein is L-tryptophan isonitrile synthase AmbI2 of Fischerella ambigua (strain UTEX 1903).